The sequence spans 455 residues: Pup--protein ligase (455 aa).

Glutamate 12 is a binding site for Mg(2+). Residue arginine 56 coordinates ATP. Mg(2+) is bound at residue tyrosine 58. Catalysis depends on aspartate 60, which acts as the Proton acceptor. Glutamate 66 lines the Mg(2+) pocket. Positions 69 and 422 each coordinate ATP.

Belongs to the Pup ligase/Pup deamidase family. Pup-conjugating enzyme subfamily.

The catalysed reaction is ATP + [prokaryotic ubiquitin-like protein]-L-glutamate + [protein]-L-lysine = ADP + phosphate + N(6)-([prokaryotic ubiquitin-like protein]-gamma-L-glutamyl)-[protein]-L-lysine.. It functions in the pathway protein degradation; proteasomal Pup-dependent pathway. The protein operates within protein modification; protein pupylation. Functionally, catalyzes the covalent attachment of the prokaryotic ubiquitin-like protein modifier Pup to the proteasomal substrate proteins, thereby targeting them for proteasomal degradation. This tagging system is termed pupylation. The ligation reaction involves the side-chain carboxylate of the C-terminal glutamate of Pup and the side-chain amino group of a substrate lysine. This Acidimicrobium ferrooxidans (strain DSM 10331 / JCM 15462 / NBRC 103882 / ICP) protein is Pup--protein ligase.